Reading from the N-terminus, the 147-residue chain is MHDAELVLKCWGGVEADFEGTGGEVLTRLFKQHPETQKLFPKFVGIASNELAGNAAVKAHGATVLKKLGELLKARGDHAAILKPLATTHANTHKIALNNFRLITEVLVKVMAEKAGLDAGGQSALRRVMDVVIGDIDTYYKEIGFAG.

Residues 2-141 (HDAELVLKCW…VIGDIDTYYK (140 aa)) form the Globin domain. His-60 serves as a coordination point for nitrite. His-60 lines the O2 pocket. His-89 contributes to the heme b binding site.

This sequence belongs to the globin family. Monomeric.

It localises to the cytoplasm. The protein localises to the sarcoplasm. It catalyses the reaction Fe(III)-heme b-[protein] + nitric oxide + H2O = Fe(II)-heme b-[protein] + nitrite + 2 H(+). The catalysed reaction is H2O2 + AH2 = A + 2 H2O. Monomeric heme protein which primary function is to store oxygen and facilitate its diffusion within muscle tissues. Reversibly binds oxygen through a pentacoordinated heme iron and enables its timely and efficient release as needed during periods of heightened demand. Depending on the oxidative conditions of tissues and cells, and in addition to its ability to bind oxygen, it also has a nitrite reductase activity whereby it regulates the production of bioactive nitric oxide. Under stress conditions, like hypoxia and anoxia, it also protects cells against reactive oxygen species thanks to its pseudoperoxidase activity. This chain is Myoglobin (mb), found in Cyprinus carpio (Common carp).